A 356-amino-acid chain; its full sequence is tRNA N6-adenosine threonylcarbamoyltransferase (356 aa).

Residues His116 and His120 each coordinate Fe cation. Substrate-binding positions include 139–143 (IVSGG), Asp174, Gly187, Asp191, and Asn281. Asp309 contributes to the Fe cation binding site.

It belongs to the KAE1 / TsaD family. Fe(2+) is required as a cofactor.

Its subcellular location is the cytoplasm. It catalyses the reaction L-threonylcarbamoyladenylate + adenosine(37) in tRNA = N(6)-L-threonylcarbamoyladenosine(37) in tRNA + AMP + H(+). In terms of biological role, required for the formation of a threonylcarbamoyl group on adenosine at position 37 (t(6)A37) in tRNAs that read codons beginning with adenine. Is involved in the transfer of the threonylcarbamoyl moiety of threonylcarbamoyl-AMP (TC-AMP) to the N6 group of A37, together with TsaE and TsaB. TsaD likely plays a direct catalytic role in this reaction. This chain is tRNA N6-adenosine threonylcarbamoyltransferase, found in Frankia casuarinae (strain DSM 45818 / CECT 9043 / HFP020203 / CcI3).